The primary structure comprises 509 residues: Proline-rich receptor-like protein kinase PERK15 (509 aa).

The tract at residues 1–44 (MSTDTIPSLSSPPAPEFPSTTPDTATSPAPSQPSIIGPSSLAPF) is disordered. The Extracellular portion of the chain corresponds to 1–61 (MSTDTIPSLS…DGGSRNVALT (61 aa)). Residues 18–34 (PSTTPDTATSPAPSQPS) show a composition bias toward low complexity. The helical transmembrane segment at 62–82 (GLITGVVLGATFVLLGVCIFV) threads the bilayer. At 83–509 (CFYKRKKRKL…IEPEKNTKDT (427 aa)) the chain is on the cytoplasmic side. Position 132 is a phosphothreonine (threonine 132). Residues 143 to 423 (FSNTNLLGQG…VRAFEGNISI (281 aa)) form the Protein kinase domain. ATP contacts are provided by residues 149 to 157 (LGQGGFGYV) and lysine 171. Residue tyrosine 216 is modified to Phosphotyrosine. Aspartate 267 acts as the Proton acceptor in catalysis. Serine 300 bears the Phosphoserine mark. A phosphothreonine mark is found at threonine 301 and threonine 306. Tyrosine 314 is modified (phosphotyrosine). The span at 468 to 499 (FGSSECSGLTSDNGQNPSGSSSITEGQRTTQE) shows a compositional bias: polar residues. A disordered region spans residues 468-509 (FGSSECSGLTSDNGQNPSGSSSITEGQRTTQEIEPEKNTKDT).

This sequence belongs to the protein kinase superfamily. Ser/Thr protein kinase family. In terms of tissue distribution, mostly expressed in inflorescence bolts, and, to a lower extent, in flower buds and siliques.

It localises to the cell membrane. The enzyme catalyses L-seryl-[protein] + ATP = O-phospho-L-seryl-[protein] + ADP + H(+). The catalysed reaction is L-threonyl-[protein] + ATP = O-phospho-L-threonyl-[protein] + ADP + H(+). The sequence is that of Proline-rich receptor-like protein kinase PERK15 (PERK15) from Arabidopsis thaliana (Mouse-ear cress).